The sequence spans 484 residues: Putative cysteine ligase BshC (484 aa).

Residues 372–435 adopt a coiled-coil conformation; sequence RAFRDRVEGL…AARDEVLARH (64 aa).

It belongs to the BshC family.

This chain is Putative cysteine ligase BshC, found in Thermus thermophilus (strain ATCC BAA-163 / DSM 7039 / HB27).